A 246-amino-acid chain; its full sequence is Probable cytokinin riboside 5'-monophosphate phosphoribohydrolase LOGL5 (246 aa).

The span at 1–10 (MMMENSREQQ) shows a compositional bias: basic and acidic residues. Residues 1–28 (MMMENSREQQPESSPANNNSKKKKKKKT) are disordered. Substrate is bound by residues Glu-103, 121–122 (RK), 138–144 (GYGTLEE), and Thr-150.

The protein belongs to the LOG family. As to expression, expressed in roots and leaves.

The catalysed reaction is N(6)-(dimethylallyl)adenosine 5'-phosphate + H2O = N(6)-dimethylallyladenine + D-ribose 5-phosphate. The enzyme catalyses 9-ribosyl-trans-zeatin 5'-phosphate + H2O = trans-zeatin + D-ribose 5-phosphate. Cytokinin-activating enzyme working in the direct activation pathway. Phosphoribohydrolase that converts inactive cytokinin nucleotides to the biologically active free-base forms. This chain is Probable cytokinin riboside 5'-monophosphate phosphoribohydrolase LOGL5 (LOGL5), found in Oryza sativa subsp. japonica (Rice).